A 132-amino-acid polypeptide reads, in one-letter code: Small ribosomal subunit protein uS9 (132 aa).

The segment at 100-132 (LKSNGLLTRDDRTKERKKPGLKRARKAPQYTKR) is disordered. The span at 114–132 (ERKKPGLKRARKAPQYTKR) shows a compositional bias: basic residues.

Belongs to the universal ribosomal protein uS9 family.

The chain is Small ribosomal subunit protein uS9 from Dehalococcoides mccartyi (strain ATCC BAA-2100 / JCM 16839 / KCTC 5957 / BAV1).